We begin with the raw amino-acid sequence, 525 residues long: MTTPVCISQAFMDSFHAHHAQLLGKRVWLACSGGRDSLGLALLCRTLFDQGRLPFLPQLIHVNHGMQAANDEWAQQVAQWAQQHDMACQIIGLNLTHKSEQAARDGRYQAMMQLMNQDDVLILGHHQDDQVETLLMRLFNGAGVTGLGAMREWTSKQAHTAQSPPDVNKPRQRIFLWRPWLEISRDQITEYAQRHNLKYIDDPTNVAQSPSKLALQTLNDRAWLRSVLLPHITERYPQASEAMARTAQLMQQASDSIDEQVTQDLAQVALAATEQQSVIALDKLAGLSAPRQAALIHHWLAPYPNQLPPSKRLVDEVLALSFRQDSNHQTCLYFDAGSEQYQVRRYQNKLYRLQHAYAQWLQMMPHQIHLPLAHNAEELSLNLADTDVLSLKQSGLEFDWQLTGVRGLMAHLARLLNSADAKVTPCQLIFEPLPRTIKLALAGRSGRKSGKKLLQALDQPSFMRGSVVLCRLDMMGSDGILQDSSTAVPLFIICIDRIWVLQSQFTALINQLLATEVLSTQILEC.

An ATP-binding site is contributed by 32 to 37 (SGGRDS).

This sequence belongs to the tRNA(Ile)-lysidine synthase family.

The protein localises to the cytoplasm. The catalysed reaction is cytidine(34) in tRNA(Ile2) + L-lysine + ATP = lysidine(34) in tRNA(Ile2) + AMP + diphosphate + H(+). Ligates lysine onto the cytidine present at position 34 of the AUA codon-specific tRNA(Ile) that contains the anticodon CAU, in an ATP-dependent manner. Cytidine is converted to lysidine, thus changing the amino acid specificity of the tRNA from methionine to isoleucine. This chain is tRNA(Ile)-lysidine synthase, found in Psychrobacter sp. (strain PRwf-1).